A 246-amino-acid chain; its full sequence is Probable transcriptional regulatory protein HS_0508 (246 aa).

It belongs to the TACO1 family.

The protein localises to the cytoplasm. The sequence is that of Probable transcriptional regulatory protein HS_0508 from Histophilus somni (strain 129Pt) (Haemophilus somnus).